Reading from the N-terminus, the 436-residue chain is Prenyltransferase nscD (436 aa).

This sequence belongs to the tryptophan dimethylallyltransferase family.

It participates in secondary metabolite biosynthesis. Prenyltransferase; part of the gene cluster that mediates the biosynthesis of neosartoricin B, a prenylated anthracenone that probably exhibits T-cell antiproliferative activity, suggestive of a physiological role as an immunosuppressive agent. The non-reducing polyketide synthase nscA probably synthesizes and cyclizes the decaketide backbone. The hydrolase nscB then mediates the product release through hydrolysis followed by spontaneous decarboxylation. The prenyltransferase nscD catalyzes the addition of the dimethylallyl group to the aromatic C5. The FAD-dependent monooxygenase nscC is then responsible for the stereospecific hydroxylation at C2. Neosartoricin B can be converted into two additional compounds neosartoricins C and D. Neosartoricin C is a spirocyclic compound that is cyclized through the attack of C3 hydroxyl on C14, followed by dehydration. On the other hand, neosartoricin D is a further cyclized compound in which attack of C2 on C14 in neosartoricin C results in the formation of the acetal-containing dioxabicyclo-octanone ring. Both of these compounds are novel and possibly represent related metabolites of the gene cluster. In Arthroderma otae (strain ATCC MYA-4605 / CBS 113480) (Microsporum canis), this protein is Prenyltransferase nscD.